A 281-amino-acid polypeptide reads, in one-letter code: Probable endonuclease 4 (281 aa).

Positions 78, 118, 149, 181, 184, 216, 229, 231, and 260 each coordinate Zn(2+).

The protein belongs to the AP endonuclease 2 family. Requires Zn(2+) as cofactor.

The catalysed reaction is Endonucleolytic cleavage to 5'-phosphooligonucleotide end-products.. Endonuclease IV plays a role in DNA repair. It cleaves phosphodiester bonds at apurinic or apyrimidinic (AP) sites, generating a 3'-hydroxyl group and a 5'-terminal sugar phosphate. The sequence is that of Probable endonuclease 4 from Thermoplasma acidophilum (strain ATCC 25905 / DSM 1728 / JCM 9062 / NBRC 15155 / AMRC-C165).